A 124-amino-acid polypeptide reads, in one-letter code: Small ribosomal subunit protein uS12c (124 aa).

This sequence belongs to the universal ribosomal protein uS12 family. Part of the 30S ribosomal subunit.

It localises to the plastid. Functionally, with S4 and S5 plays an important role in translational accuracy. Located at the interface of the 30S and 50S subunits. This is Small ribosomal subunit protein uS12c (rps12) from Helicosporidium sp. subsp. Simulium jonesii (Green alga).